A 1137-amino-acid polypeptide reads, in one-letter code: Voltage-dependent calcium channel subunit alpha-2/delta-4 (1137 aa).

Residues Met1–Pro19 form the signal peptide. Residues Ala20–Thr1115 are Extracellular-facing. Residue Asn201 is glycosylated (N-linked (GlcNAc...) asparagine). A VWFA domain is found at Asp291 to Leu473. The a divalent metal cation site is built by Asp297, Ser299, and Ser301. Residues Asp297–Ser301 carry the MIDAS-like motif motif. Cysteines 447 and 1097 form a disulfide. The Cache domain occupies Trp487–Leu580. N-linked (GlcNAc...) asparagine glycosylation is present at Asn664. Residues Ser1116 to Leu1136 form a helical membrane-spanning segment. Position 1137 (Arg1137) is a topological domain, cytoplasmic.

The protein belongs to the calcium channel subunit alpha-2/delta family. In terms of assembly, dimer formed of alpha-2-2 and delta-2 chains; disulfide-linked. Voltage-dependent calcium channels are multisubunit complexes, consisting of alpha-1 (CACNA1), alpha-2 (CACNA2D), beta (CACNB) and delta (CACNA2D) subunits in a 1:1:1:1 ratio. Interacts with CACNA1C and CACNB3. Post-translationally, may be proteolytically processed into subunits alpha-2-4 and delta-4 that are disulfide-linked. It is however unclear whether such cleavage really takes place in vivo and has a functional role. Predominantly expressed in certain types of endocrine cells. Present in the Paneth cells of the small intestine. Also present in the erythroblasts in the fetal liver, in the cells of the zona reticularis of the adrenal gland and in the basophils of the pituitary. Present at low level in some brain regions such as the cerebellum (at protein level).

It localises to the membrane. Functionally, the alpha-2/delta subunit of voltage-dependent calcium channels regulates calcium current density and activation/inactivation kinetics of the calcium channel. This is Voltage-dependent calcium channel subunit alpha-2/delta-4 (CACNA2D4) from Homo sapiens (Human).